The sequence spans 106 residues: Large ribosomal subunit protein uL24 (106 aa).

Over residues 84–97 the composition is skewed to basic and acidic residues; it reads EKIGRELGAKEKAR. Residues 84 to 106 are disordered; it reads EKIGRELGAKEKARLQKRKAAAK.

Belongs to the universal ribosomal protein uL24 family. Part of the 50S ribosomal subunit.

One of two assembly initiator proteins, it binds directly to the 5'-end of the 23S rRNA, where it nucleates assembly of the 50S subunit. Its function is as follows. One of the proteins that surrounds the polypeptide exit tunnel on the outside of the subunit. The sequence is that of Large ribosomal subunit protein uL24 from Anaeromyxobacter sp. (strain K).